The primary structure comprises 112 residues: Protein BEX5 (112 aa).

Composition is skewed to basic and acidic residues over residues 1–12 (MEKDPKERREEE) and 30–51 (PKPR…REDM). Residues 1 to 56 (MEKDPKERREEEQAPVQNEEACPMGGGEGPKPRENVRGDWDPPAQDFREDMPNGLV) form a disordered region. A his cluster region spans residues 101-105 (HHDHH). Residue cysteine 109 coordinates Zn(2+).

The protein belongs to the BEX family. Post-translationally, ubiquitinated. Degraded by the proteasome.

Its subcellular location is the cytoplasm. This Bos taurus (Bovine) protein is Protein BEX5 (BEX5).